The chain runs to 147 residues: SPI-1 type 3 secretion system pilotin (147 aa).

Positions 1 to 15 (MKKFYSCLPVFLLIG) are cleaved as a signal peptide. Residue C16 is the site of N-palmitoyl cysteine attachment. C16 carries the S-diacylglycerol cysteine lipid modification.

This sequence belongs to the InvH family.

Its subcellular location is the cell outer membrane. Involved in the synthesis of the type III secretion system (T3SS), also called injectisome, which is used to inject bacterial effector proteins into eukaryotic host cells. Pilot protein that is required for the proper localization of the secretin InvG/SctC in the outer membrane. Necessary for efficient adherence and entry of these organisms into cultured epithelial cells. This chain is SPI-1 type 3 secretion system pilotin, found in Salmonella typhimurium (strain SL1344).